Here is a 135-residue protein sequence, read N- to C-terminus: Kappa-casein (135 aa).

The O-linked (GalNAc...) threonine glycan is linked to Thr96. Residue Ser114 is modified to Phosphoserine; alternate. Ser114 carries O-linked (GalNAc...) serine; alternate glycosylation. Thr131 is a glycosylation site (O-linked (GalNAc...) threonine). Ser132 is subject to Phosphoserine.

The protein belongs to the kappa-casein family. As to expression, mammary gland specific. Secreted in milk.

The protein localises to the secreted. In terms of biological role, kappa-casein stabilizes micelle formation, preventing casein precipitation in milk. The protein is Kappa-casein (CSN3) of Equus grevyi (Grevy's zebra).